The following is a 414-amino-acid chain: Succinylornithine transaminase (414 aa).

An N6-(pyridoxal phosphate)lysine modification is found at Lys260.

The protein belongs to the class-III pyridoxal-phosphate-dependent aminotransferase family. AstC subfamily. It depends on pyridoxal 5'-phosphate as a cofactor.

The catalysed reaction is N(2)-succinyl-L-ornithine + 2-oxoglutarate = N-succinyl-L-glutamate 5-semialdehyde + L-glutamate. The protein operates within amino-acid degradation; L-arginine degradation via AST pathway; L-glutamate and succinate from L-arginine: step 3/5. Catalyzes the transamination of N(2)-succinylornithine and alpha-ketoglutarate into N(2)-succinylglutamate semialdehyde and glutamate. Can also act as an acetylornithine aminotransferase. In Yersinia enterocolitica serotype O:8 / biotype 1B (strain NCTC 13174 / 8081), this protein is Succinylornithine transaminase.